Consider the following 239-residue polypeptide: 1-(5-phosphoribosyl)-5-[(5-phosphoribosylamino)methylideneamino] imidazole-4-carboxamide isomerase (239 aa).

The Proton acceptor role is filled by Asp8. The active-site Proton donor is Asp129.

This sequence belongs to the HisA/HisF family.

Its subcellular location is the cytoplasm. The catalysed reaction is 1-(5-phospho-beta-D-ribosyl)-5-[(5-phospho-beta-D-ribosylamino)methylideneamino]imidazole-4-carboxamide = 5-[(5-phospho-1-deoxy-D-ribulos-1-ylimino)methylamino]-1-(5-phospho-beta-D-ribosyl)imidazole-4-carboxamide. Its pathway is amino-acid biosynthesis; L-histidine biosynthesis; L-histidine from 5-phospho-alpha-D-ribose 1-diphosphate: step 4/9. This Roseobacter denitrificans (strain ATCC 33942 / OCh 114) (Erythrobacter sp. (strain OCh 114)) protein is 1-(5-phosphoribosyl)-5-[(5-phosphoribosylamino)methylideneamino] imidazole-4-carboxamide isomerase.